Reading from the N-terminus, the 245-residue chain is Ribonuclease 3 (245 aa).

The RNase III domain maps to 19 to 148; the sequence is FKVFQEKIGI…FIGALYLDQG (130 aa). Glu-61 contributes to the Mg(2+) binding site. Residue Asp-65 is part of the active site. Mg(2+) is bound by residues Asp-134 and Glu-137. Glu-137 is an active-site residue. One can recognise a DRBM domain in the interval 174 to 243; it reads DYKSQLQELI…AAEALKKLKE (70 aa).

It belongs to the ribonuclease III family. Homodimer. The cofactor is Mg(2+).

Its subcellular location is the cytoplasm. It catalyses the reaction Endonucleolytic cleavage to 5'-phosphomonoester.. In terms of biological role, digests double-stranded RNA. Involved in the processing of primary rRNA transcript to yield the immediate precursors to the large and small rRNAs (23S and 16S). Processes some mRNAs, and tRNAs when they are encoded in the rRNA operon. Processes pre-crRNA and tracrRNA of type II CRISPR loci if present in the organism. The chain is Ribonuclease 3 from Bacillus cereus (strain ATCC 14579 / DSM 31 / CCUG 7414 / JCM 2152 / NBRC 15305 / NCIMB 9373 / NCTC 2599 / NRRL B-3711).